Reading from the N-terminus, the 66-residue chain is Prokaryotic ubiquitin-like protein UBact (66 aa).

Residues 1-66 are disordered; it reads MNMRYTLMPE…AERYRQRTGE (66 aa). Over residues 30–66 the composition is skewed to basic and acidic residues; it reads GGPRRPETGSPDKDNLLKRMRKVDPKQAERYRQRTGE. Residue Glu66 forms an Isoglutamyl lysine isopeptide (Glu-Lys) (interchain with K-? in acceptor proteins) linkage.

Belongs to the ubiquitin-like protein UBact family.

Its function is as follows. May function as a protein modifier covalently attached to lysine residues of substrate proteins. This may serve to target the modified proteins for degradation by proteasomes. The protein is Prokaryotic ubiquitin-like protein UBact of Nitrospira moscoviensis.